We begin with the raw amino-acid sequence, 604 residues long: Netrin-1 (604 aa).

A signal peptide spans 1-24 (MMRAVWEALAALAAVACLVGAVRG). The 238-residue stretch at 47–284 (HPRRCIPDFV…AVSDLQVGGR (238 aa)) folds into the Laminin N-terminal domain. 3 N-linked (GlcNAc...) asparagine glycosylation sites follow: N95, N116, and N131. Cystine bridges form between C119–C152, C285–C294, C287–C304, C306–C315, C318–C338, C341–C350, C343–C368, C371–C380, C383–C401, C404–C416, C406–C423, C425–C434, C437–C451, C472–C544, and C491–C601. 3 Laminin EGF-like domains span residues 285 to 340 (CKCN…ECVA), 341 to 403 (CNCN…ACKA), and 404 to 453 (CDCH…PCIK). An N-linked (GlcNAc...) asparagine glycan is attached at N417. Positions 472–601 (CDSYCKASKG…FQQREKKGKC (130 aa)) constitute an NTR domain. The short motif at 530–532 (RGD) is the Cell attachment site element.

As to quaternary structure, binds to its receptors; DCC, UNC5A, UNC5B, UNC5C and probably UNC5D. Binds to its receptor; DSCAM. Interacts with DCC. Interacts with APP. In terms of tissue distribution, widely expressed in normal adult tissues with highest levels in heart, small intestine, colon, liver and prostate. Reduced expression in brain tumors and neuroblastomas. Expressed in epididymis (at protein level).

Its subcellular location is the secreted. The protein resides in the cytoplasm. Netrins control guidance of CNS commissural axons and peripheral motor axons. Its association with either DCC or some UNC5 receptors will lead to axon attraction or repulsion, respectively. Binding to UNC5C might cause dissociation of UNC5C from polymerized TUBB3 in microtubules and thereby lead to increased microtubule dynamics and axon repulsion. Involved in dorsal root ganglion axon projection towards the spinal cord. It also serves as a survival factor via its association with its receptors which prevent the initiation of apoptosis. Involved in tumorigenesis by regulating apoptosis. The chain is Netrin-1 (NTN1) from Homo sapiens (Human).